Reading from the N-terminus, the 316-residue chain is IDS-like terpene synthase 2 (316 aa).

Residues Asp-69 and Asp-73 each contribute to the Mg(2+) site.

This sequence belongs to the FPP/GGPP synthase family. The cofactor is Mg(2+).

The catalysed reaction is (2E)-geranyl diphosphate + H2O = linalool + diphosphate. It catalyses the reaction (2E,6E)-farnesyl diphosphate + H2O = (6E)-nerolidol + diphosphate. Terpene synthase that shows monoterpene synthase activity and produces linalool, using geranyl diphosphate (GPP) as substrate. Also shows sesquiterpene synthase activity as it is able to convert farnesyl diphosphate (FPP) into (E)-nerolidol. This is IDS-like terpene synthase 2 from Melampsora larici-populina (strain 98AG31 / pathotype 3-4-7) (Poplar leaf rust fungus).